The following is an 873-amino-acid chain: Tetratricopeptide repeat protein 16 (873 aa).

The disordered stretch occupies residues 1–20 (MTDSDEDALKVDQGPSRDIP). TPR repeat units follow at residues 61–94 (VREY…DPQL), 96–128 (DFYA…QQDN), 136–169 (TFVL…QPEK), 251–284 (AQQA…NPLD), 285–318 (PSLF…VTED), 331–364 (LLTY…EQQE), 365–398 (KGLY…SPQD), and 406–439 (GLLQ…NPQK). Disordered stretches follow at residues 553 to 626 (EELK…TSET) and 639 to 873 (SATA…YEAV). A compositionally biased stretch (acidic residues) spans 571–582 (GEAEAPEEEEEK). Basic and acidic residues predominate over residues 583–593 (EKEKKEEKKSE). Polar residues-rich tracts occupy residues 600 to 626 (ASLS…TSET), 639 to 663 (SATA…NNRE), and 675 to 693 (TQGQ…SQRR). A compositionally biased stretch (basic residues) spans 694-708 (NSSKTKATIHKRNSS). Over residues 709–750 (KTKATQSQRRNSSKTRATQGQGQSSSKTEATQGQRQSSSEIE) the composition is skewed to polar residues. Residues 763-784 (KTTRSPRQRPRKVKAARGRSWR) show a composition bias toward basic residues. Polar residues-rich tracts occupy residues 800–828 (RSST…GQRS) and 836–860 (GKSQ…SLSK).

The sequence is that of Tetratricopeptide repeat protein 16 (TTC16) from Homo sapiens (Human).